An 89-amino-acid polypeptide reads, in one-letter code: Small ribosomal subunit protein uS15 (89 aa).

It belongs to the universal ribosomal protein uS15 family. In terms of assembly, part of the 30S ribosomal subunit. Forms a bridge to the 50S subunit in the 70S ribosome, contacting the 23S rRNA.

Its function is as follows. One of the primary rRNA binding proteins, it binds directly to 16S rRNA where it helps nucleate assembly of the platform of the 30S subunit by binding and bridging several RNA helices of the 16S rRNA. Functionally, forms an intersubunit bridge (bridge B4) with the 23S rRNA of the 50S subunit in the ribosome. This is Small ribosomal subunit protein uS15 from Shewanella piezotolerans (strain WP3 / JCM 13877).